The following is a 122-amino-acid chain: S-adenosylmethionine decarboxylase proenzyme (122 aa).

Serine 69 functions as the Schiff-base intermediate with substrate; via pyruvic acid in the catalytic mechanism. Serine 69 carries the pyruvic acid (Ser); by autocatalysis modification. Catalysis depends on histidine 74, which acts as the Proton acceptor; for processing activity. Cysteine 89 acts as the Proton donor; for catalytic activity in catalysis.

The protein belongs to the prokaryotic AdoMetDC family. Type 1 subfamily. As to quaternary structure, heterotetramer of two alpha and two beta chains arranged as a dimer of alpha/beta heterodimers. Requires pyruvate as cofactor. Post-translationally, is synthesized initially as an inactive proenzyme. Formation of the active enzyme involves a self-maturation process in which the active site pyruvoyl group is generated from an internal serine residue via an autocatalytic post-translational modification. Two non-identical subunits are generated from the proenzyme in this reaction, and the pyruvate is formed at the N-terminus of the alpha chain, which is derived from the carboxyl end of the proenzyme. The post-translation cleavage follows an unusual pathway, termed non-hydrolytic serinolysis, in which the side chain hydroxyl group of the serine supplies its oxygen atom to form the C-terminus of the beta chain, while the remainder of the serine residue undergoes an oxidative deamination to produce ammonia and the pyruvoyl group blocking the N-terminus of the alpha chain.

It carries out the reaction S-adenosyl-L-methionine + H(+) = S-adenosyl 3-(methylsulfanyl)propylamine + CO2. It participates in amine and polyamine biosynthesis; S-adenosylmethioninamine biosynthesis; S-adenosylmethioninamine from S-adenosyl-L-methionine: step 1/1. Catalyzes the decarboxylation of S-adenosylmethionine to S-adenosylmethioninamine (dcAdoMet), the propylamine donor required for the synthesis of the polyamines spermine and spermidine from the diamine putrescine. The chain is S-adenosylmethionine decarboxylase proenzyme from Sulfolobus acidocaldarius (strain ATCC 33909 / DSM 639 / JCM 8929 / NBRC 15157 / NCIMB 11770).